The chain runs to 408 residues: MQEIYLGVGMFTIIVLVLVAIIMFAKSKLVPQGDVEILINDDEDKKIVTQPGTKLLGALANAGIFVSSACGGGGSCGQCRVTVKEGGGDILPTELDHITKREAREGCRLSCQVNVKQDMEIELPEEVFGIRKWDCTVKSNDNVATFIKEFIVQLPEGEEVPFRAGGFIQIEAPPHHVKYKDFDISEEYHGDWDRFGFFDVESKVDEEVVRAYSMANYPEEKGIIMLNVRIATPPPNDLSLPAGKMSSYIFSLKPGDKVTISGPFGEFFAKDTDAEMVFIGGGAGMAPMRSHLFDQMRRIKTDRKVSFWYGARSKKEMFYVEDFDMLAEENENFDWHVALSDPQPEDNWEGDTGFIHNVLYERYLKDHDAPEDCEFYMCGPPVMNAAVINLLKDLGVEDENIMLDDFGG.

A helical membrane pass occupies residues 4 to 24 (IYLGVGMFTIIVLVLVAIIMF). One can recognise a 2Fe-2S ferredoxin-type domain in the interval 33–127 (GDVEILINDD…DMEIELPEEV (95 aa)). Residues C70, C76, C79, and C111 each coordinate [2Fe-2S] cluster. In terms of domain architecture, FAD-binding FR-type spans 130-270 (IRKWDCTVKS…SGPFGEFFAK (141 aa)).

The protein belongs to the NqrF family. Composed of six subunits; NqrA, NqrB, NqrC, NqrD, NqrE and NqrF. Requires [2Fe-2S] cluster as cofactor. FAD serves as cofactor.

It is found in the cell inner membrane. The enzyme catalyses a ubiquinone + n Na(+)(in) + NADH + H(+) = a ubiquinol + n Na(+)(out) + NAD(+). NQR complex catalyzes the reduction of ubiquinone-1 to ubiquinol by two successive reactions, coupled with the transport of Na(+) ions from the cytoplasm to the periplasm. The first step is catalyzed by NqrF, which accepts electrons from NADH and reduces ubiquinone-1 to ubisemiquinone by a one-electron transfer pathway. The sequence is that of Na(+)-translocating NADH-quinone reductase subunit F from Idiomarina loihiensis (strain ATCC BAA-735 / DSM 15497 / L2-TR).